The primary structure comprises 518 residues: GMP synthase [glutamine-hydrolyzing] (518 aa).

The Glutamine amidotransferase type-1 domain occupies 11-203; the sequence is KIIVLDFGSQ…AFDVCQARSN (193 aa). Residue Cys88 is the Nucleophile of the active site. Active-site residues include His177 and Glu179. Residues 204–393 enclose the GMPS ATP-PPase domain; the sequence is WSMDDFIDMQ…LGMPHELVWR (190 aa). 231 to 237 contributes to the ATP binding site; it reads SGGVDSS.

Homodimer.

It carries out the reaction XMP + L-glutamine + ATP + H2O = GMP + L-glutamate + AMP + diphosphate + 2 H(+). Its pathway is purine metabolism; GMP biosynthesis; GMP from XMP (L-Gln route): step 1/1. In terms of biological role, catalyzes the synthesis of GMP from XMP. This Ligilactobacillus salivarius (strain UCC118) (Lactobacillus salivarius) protein is GMP synthase [glutamine-hydrolyzing].